A 92-amino-acid polypeptide reads, in one-letter code: uncharacterized protein (92 aa).

The signal sequence occupies residues Met1–Ala23.

This is an uncharacterized protein from Acheta domesticus (House cricket).